A 164-amino-acid polypeptide reads, in one-letter code: MAGEKMVRDISGVYARLFDHRAVLQAECKYMLREFEGKRNDRELERLRESEQKIRQVQEEIPKCITESVKLKDLLEELKVAREKCHEILVKEEQDLFKERREEIFIESKKNWETFIGEIAEEEKRIEEEFEQSAEKLRARYGVQLVRNPKEPDDKGELQPQEIA.

The stretch at 36–91 (EGKRNDRELERLRESEQKIRQVQEEIPKCITESVKLKDLLEELKVAREKCHEILVK) forms a coiled coil.

Belongs to the BLOC1S5 family. As to quaternary structure, component of the biogenesis of lysosome-related organelles complex 1 (BLOC-1).

Component of the BLOC-1 complex, a complex that is required for normal biogenesis of lysosome-related organelles (LRO). May play a role in intracellular vesicle trafficking. In Nematostella vectensis (Starlet sea anemone), this protein is Biogenesis of lysosome-related organelles complex 1 subunit 5 (bloc1s5).